The chain runs to 634 residues: Threonine--tRNA ligase (634 aa).

Residues 1 to 61 (MINIRFPDGS…NSNCELRLIT (61 aa)) enclose the TGS domain. The segment at 241–532 (DHRKIGKVLD…LIEHYAGNLP (292 aa)) is catalytic. Cys332, His383, and His509 together coordinate Zn(2+).

It belongs to the class-II aminoacyl-tRNA synthetase family. In terms of assembly, homodimer. It depends on Zn(2+) as a cofactor.

It is found in the cytoplasm. It catalyses the reaction tRNA(Thr) + L-threonine + ATP = L-threonyl-tRNA(Thr) + AMP + diphosphate + H(+). Functionally, catalyzes the attachment of threonine to tRNA(Thr) in a two-step reaction: L-threonine is first activated by ATP to form Thr-AMP and then transferred to the acceptor end of tRNA(Thr). Also edits incorrectly charged L-seryl-tRNA(Thr). This chain is Threonine--tRNA ligase, found in Francisella tularensis subsp. tularensis (strain WY96-3418).